We begin with the raw amino-acid sequence, 479 residues long: Cardiolipin synthase A (479 aa).

2 consecutive transmembrane segments (helical) span residues 8 to 28 (IFGY…IHAV) and 38 to 58 (IAWA…YLVF). PLD phosphodiesterase domains lie at 218-245 (VNFR…GDEY) and 392-419 (QPGF…DNRS). Catalysis depends on residues His-223, Lys-225, Asp-230, His-397, Lys-399, and Asp-404.

It belongs to the phospholipase D family. Cardiolipin synthase subfamily. ClsA sub-subfamily.

It is found in the cell inner membrane. The enzyme catalyses 2 a 1,2-diacyl-sn-glycero-3-phospho-(1'-sn-glycerol) = a cardiolipin + glycerol. Catalyzes the reversible phosphatidyl group transfer from one phosphatidylglycerol molecule to another to form cardiolipin (CL) (diphosphatidylglycerol) and glycerol. This Pseudomonas fluorescens (strain ATCC BAA-477 / NRRL B-23932 / Pf-5) protein is Cardiolipin synthase A.